The primary structure comprises 684 residues: Putative glucan endo-1,3-beta-glucosidase btgC (684 aa).

Positions 1-10 are enriched in polar residues; sequence MAGVNRSFSY. Disordered regions lie at residues 1–38, 124–143, and 157–182; these read MAGV…LYST, AERD…APPD, and DSYS…TTPS. Topologically, residues 1–302 are cytoplasmic; that stretch reads MAGVNRSFSY…HIIGGGSRKR (302 aa). The span at 12–32 shows a compositional bias: basic and acidic residues; sequence RGDDALLRDDEREISPLRSAE. Residues 303–323 traverse the membrane as a helical; Signal-anchor for type II membrane protein segment; sequence GWIVGLILAAVIVAAIVGGAV. Residues 324 to 684 lie on the Extracellular side of the membrane; it reads GGILGHQEHD…IPDCGGKTIT (361 aa). Residues 330-358 form a disordered region; that stretch reads QEHDGDTSSSSSSSSSSGTGSGGSDKGDG. Residues 336 to 347 are compositionally biased toward low complexity; it reads TSSSSSSSSSSG. N-linked (GlcNAc...) asparagine glycosylation is found at asparagine 404, asparagine 427, asparagine 455, and asparagine 474. The Proton donor role is filled by glutamate 487. Glutamate 586 functions as the Nucleophile in the catalytic mechanism. Asparagine 631 carries an N-linked (GlcNAc...) asparagine glycan.

This sequence belongs to the glycosyl hydrolase 17 family.

Its subcellular location is the cell membrane. It catalyses the reaction Hydrolysis of (1-&gt;3)-beta-D-glucosidic linkages in (1-&gt;3)-beta-D-glucans.. In terms of biological role, glucanases play a role in cell expansion during growth, in cell-cell fusion during mating, and in spore release during sporulation. This enzyme may be involved in beta-glucan degradation. Active on laminarin and lichenan. In Aspergillus niger (strain ATCC MYA-4892 / CBS 513.88 / FGSC A1513), this protein is Putative glucan endo-1,3-beta-glucosidase btgC (btgC).